Reading from the N-terminus, the 198-residue chain is Recombination protein RecR (198 aa).

The C4-type zinc-finger motif lies at 57–72 (CSVCGNLTDEDPCSIC). The 96-residue stretch at 80–175 (SMILVVEDSK…KVTRLARGLA (96 aa)) folds into the Toprim domain.

The protein belongs to the RecR family.

In terms of biological role, may play a role in DNA repair. It seems to be involved in an RecBC-independent recombinational process of DNA repair. It may act with RecF and RecO. The protein is Recombination protein RecR of Streptococcus uberis (strain ATCC BAA-854 / 0140J).